The primary structure comprises 343 residues: Anthranilate phosphoribosyltransferase (343 aa).

Residues Gly-84, 87-88 (GD), Thr-92, 94-97 (NIST), 112-120 (KHGNRGVSS), and Ser-124 each bind 5-phospho-alpha-D-ribose 1-diphosphate. Gly-84 contributes to the anthranilate binding site. Ser-96 is a Mg(2+) binding site. Asn-115 provides a ligand contact to anthranilate. Residue Arg-170 participates in anthranilate binding. Residues Asp-229 and Glu-230 each contribute to the Mg(2+) site.

It belongs to the anthranilate phosphoribosyltransferase family. Homodimer. Mg(2+) serves as cofactor.

The enzyme catalyses N-(5-phospho-beta-D-ribosyl)anthranilate + diphosphate = 5-phospho-alpha-D-ribose 1-diphosphate + anthranilate. Its pathway is amino-acid biosynthesis; L-tryptophan biosynthesis; L-tryptophan from chorismate: step 2/5. In terms of biological role, catalyzes the transfer of the phosphoribosyl group of 5-phosphorylribose-1-pyrophosphate (PRPP) to anthranilate to yield N-(5'-phosphoribosyl)-anthranilate (PRA). In Burkholderia pseudomallei (strain 1106a), this protein is Anthranilate phosphoribosyltransferase.